The primary structure comprises 331 residues: Phosphate acyltransferase (331 aa).

Belongs to the PlsX family. As to quaternary structure, homodimer. Probably interacts with PlsY.

It localises to the cytoplasm. The enzyme catalyses a fatty acyl-[ACP] + phosphate = an acyl phosphate + holo-[ACP]. The protein operates within lipid metabolism; phospholipid metabolism. In terms of biological role, catalyzes the reversible formation of acyl-phosphate (acyl-PO(4)) from acyl-[acyl-carrier-protein] (acyl-ACP). This enzyme utilizes acyl-ACP as fatty acyl donor, but not acyl-CoA. The sequence is that of Phosphate acyltransferase from Malacoplasma penetrans (strain HF-2) (Mycoplasma penetrans).